The chain runs to 314 residues: Homeobox protein knotted-1-like 3 (314 aa).

The ELK domain occupies 218-238 (ELKIELKQGFKSRIEDVREEI). A DNA-binding region (homeobox; TALE-type) is located at residues 239 to 302 (LRKRRAGKLP…NQRKRNWHNN (64 aa)).

Belongs to the TALE/KNOX homeobox family. In terms of tissue distribution, isoform 1 is expressed in roots and flowers, and at lower levels in leaf blades and leaf sheaths. Isoform 2 is expressed in roots and flowers.

The protein resides in the nucleus. The chain is Homeobox protein knotted-1-like 3 (HOS66) from Oryza sativa subsp. japonica (Rice).